The primary structure comprises 756 residues: 5-methyltetrahydropteroyltriglutamate--homocysteine methyltransferase (756 aa).

Residues 20–23 (RELK) and Lys-114 each bind 5-methyltetrahydropteroyltri-L-glutamate. Residues 433-435 (IGS) and Glu-486 each bind L-homocysteine. L-methionine-binding positions include 433–435 (IGS) and Glu-486. 5-methyltetrahydropteroyltri-L-glutamate-binding positions include 517–518 (RC) and Trp-563. Residue Asp-601 coordinates L-homocysteine. Residue Asp-601 coordinates L-methionine. Position 607 (Glu-607) interacts with 5-methyltetrahydropteroyltri-L-glutamate. 3 residues coordinate Zn(2+): His-643, Cys-645, and Glu-667. Catalysis depends on His-696, which acts as the Proton donor. Zn(2+) is bound at residue Cys-728.

This sequence belongs to the vitamin-B12 independent methionine synthase family. Zn(2+) serves as cofactor.

It catalyses the reaction 5-methyltetrahydropteroyltri-L-glutamate + L-homocysteine = tetrahydropteroyltri-L-glutamate + L-methionine. The protein operates within amino-acid biosynthesis; L-methionine biosynthesis via de novo pathway; L-methionine from L-homocysteine (MetE route): step 1/1. Its function is as follows. Catalyzes the transfer of a methyl group from 5-methyltetrahydrofolate to homocysteine resulting in methionine formation. This Mycolicibacterium paratuberculosis (strain ATCC BAA-968 / K-10) (Mycobacterium paratuberculosis) protein is 5-methyltetrahydropteroyltriglutamate--homocysteine methyltransferase.